The primary structure comprises 502 residues: L-ornithine N(5)-monooxygenase (502 aa).

The span at 1–10 shows a compositional bias: basic and acidic residues; the sequence is MEPVERKLEI. Positions 1 to 34 are disordered; sequence MEPVERKLEIGSRSYSKMPLTQQRSSGEPPRLKA. Residues 13 to 26 show a composition bias toward polar residues; it reads RSYSKMPLTQQRSS. FAD-binding positions include 83 to 91 and Q102; that span reads ERQKQFAWH. K107 is a binding site for substrate. V168 is an FAD binding site. NADP(+)-binding positions include 254–257 and R279; that span reads SGQS. Substrate-binding positions include 293–296 and N323; that span reads NEVF. 323 to 325 provides a ligand contact to NADP(+); the sequence is NYS. 466-468 is a binding site for FAD; sequence SLL. Residue S469 coordinates substrate.

The protein belongs to the lysine N(6)-hydroxylase/L-ornithine N(5)-oxygenase family. As to quaternary structure, homotetramer. FAD is required as a cofactor.

The catalysed reaction is L-ornithine + NADPH + O2 = N(5)-hydroxy-L-ornithine + NADP(+) + H2O. It carries out the reaction L-ornithine + NADH + O2 = N(5)-hydroxy-L-ornithine + NAD(+) + H2O. Its pathway is siderophore biosynthesis. In terms of biological role, catalyzes the conversion of L-ornithine to N(5)-hydroxyornithine, the first step in the biosynthesis of all hydroxamate-containing siderophores, such as deferriferrichrysin. The polypeptide is L-ornithine N(5)-monooxygenase (Aspergillus oryzae (strain ATCC 42149 / RIB 40) (Yellow koji mold)).